A 316-amino-acid chain; its full sequence is Cuticle collagen 12 (316 aa).

The N-terminal stretch at 1-36 (MTEDPKQIAQETESLRKVAFFGIAVSTIATLTAIIA) is a signal peptide. 2 stretches are compositionally biased toward low complexity: residues 127–157 (SGAA…PGQD) and 183–204 (APGQ…GAAL). The tract at residues 127–316 (SGAAGPAGSP…CPPPRTAPGY (190 aa)) is disordered. Triple-helical region regions lie at residues 128 to 157 (GAAG…PGQD), 176 to 202 (GPPG…SGGA), 206 to 235 (GPPG…PGQV), 240 to 266 (GTPG…AGSS), and 269 to 304 (GGPG…EGAC). Residues 205 to 217 (PGPPGPAGPPGPA) are compositionally biased toward pro residues. A compositionally biased stretch (low complexity) spans 219 to 234 (QPGSNGNAGAPGAPGQ). Residues 241–251 (TPGPAGPPGSP) show a composition bias toward pro residues. Low complexity-rich tracts occupy residues 256–266 (APGQPGQAGSS) and 276–295 (DAGA…PGQD). Residues 307-316 (CPPPRTAPGY) are compositionally biased toward pro residues.

This sequence belongs to the cuticular collagen family. In terms of assembly, collagen polypeptide chains are complexed within the cuticle by disulfide bonds and other types of covalent cross-links.

Nematode cuticles are composed largely of collagen-like proteins. The cuticle functions both as an exoskeleton and as a barrier to protect the worm from its environment. The polypeptide is Cuticle collagen 12 (col-12) (Caenorhabditis elegans).